A 1308-amino-acid polypeptide reads, in one-letter code: Cadherin-related family member 2 (1308 aa).

The N-terminal stretch at 1 to 20 is a signal peptide; it reads MAWLWLLCALLPAFMVSVTA. Residues 21–1152 are Extracellular-facing; sequence NSPPSFGVNM…EPDQQKLLTS (1132 aa). 9 Cadherin domains span residues 33-124, 125-241, 242-353, 368-480, 481-586, 586-695, 695-807, 809-927, and 929-1051; these read VTLP…IPVF, LNTE…DPRF, IREF…KPEF, AQVN…RPVF, SQSL…PPVV, VRGS…LPVF, FNQS…PPTL, AASL…APYF, and PNNQ…RLQF. The helical transmembrane segment at 1153 to 1173 threads the bilayer; the sequence is VIIGLVVSLVLVLVILITALV. Topologically, residues 1174–1308 are cytoplasmic; it reads CLRKSYHRKL…TNPGLDTTDL (135 aa). Positions 1178-1308 are mediates interaction with USH1C and MYO7B and is required for proper localization to microvilli tips and function in microvilli organization; the sequence is SYHRKLRAMK…TNPGLDTTDL (131 aa). Ser1245 bears the Phosphoserine mark. The tract at residues 1251 to 1308 is disordered; the sequence is VDLDMDSKEFKRKDLPGDPPEPDPEPLTAVLSGRSAGASEQQKKNLSFTNPGLDTTDL. Residues 1255–1266 are compositionally biased toward basic and acidic residues; sequence MDSKEFKRKDLP. Positions 1288–1308 are enriched in polar residues; it reads ASEQQKKNLSFTNPGLDTTDL. The residue at position 1297 (Ser1297) is a Phosphoserine.

In terms of assembly, part of the IMAC/intermicrovillar adhesion complex/intermicrovillar tip-link complex composed of ANKS4B, MYO7B, USH1C, CDHR2 and CDHR5. Interacts with MAST2. Interacts (via cytoplasmic domain) with USH1C and MYO7B; required for proper localization of CDHR2 to microvilli tips and its function in brush border differentiation.

It is found in the apical cell membrane. The protein localises to the cell projection. The protein resides in the microvillus membrane. Its subcellular location is the cell junction. Functionally, intermicrovillar adhesion molecule that forms, via its extracellular domain, calcium-dependent heterophilic complexes with CDHR5 on adjacent microvilli. Thereby, controls the packing of microvilli at the apical membrane of epithelial cells. Through its cytoplasmic domain, interacts with microvillus cytoplasmic proteins to form the intermicrovillar adhesion complex/IMAC. This complex plays a central role in microvilli and epithelial brush border differentiation. May also play a role in cell-cell adhesion and contact inhibition in epithelial cells. This chain is Cadherin-related family member 2, found in Mus musculus (Mouse).